Consider the following 301-residue polypeptide: Quinolinate synthase (301 aa).

Positions 21 and 38 each coordinate iminosuccinate. Cysteine 83 lines the [4Fe-4S] cluster pocket. Iminosuccinate contacts are provided by residues 109 to 111 (YIN) and serine 126. Position 169 (cysteine 169) interacts with [4Fe-4S] cluster. Iminosuccinate is bound by residues 195 to 197 (HPE) and threonine 212. Residue cysteine 257 coordinates [4Fe-4S] cluster.

This sequence belongs to the quinolinate synthase family. Type 2 subfamily. [4Fe-4S] cluster serves as cofactor.

The protein localises to the cytoplasm. The enzyme catalyses iminosuccinate + dihydroxyacetone phosphate = quinolinate + phosphate + 2 H2O + H(+). Its pathway is cofactor biosynthesis; NAD(+) biosynthesis; quinolinate from iminoaspartate: step 1/1. Its function is as follows. Catalyzes the condensation of iminoaspartate with dihydroxyacetone phosphate to form quinolinate. This chain is Quinolinate synthase, found in Clostridium perfringens (strain 13 / Type A).